The sequence spans 222 residues: Translation initiation factor 6 (222 aa).

This sequence belongs to the eIF-6 family.

Binds to the 50S ribosomal subunit and prevents its association with the 30S ribosomal subunit to form the 70S initiation complex. In Methanothermobacter thermautotrophicus (strain ATCC 29096 / DSM 1053 / JCM 10044 / NBRC 100330 / Delta H) (Methanobacterium thermoautotrophicum), this protein is Translation initiation factor 6.